We begin with the raw amino-acid sequence, 446 residues long: Na(+)-translocating NADH-quinone reductase subunit A (446 aa).

The protein belongs to the NqrA family. In terms of assembly, composed of six subunits; NqrA, NqrB, NqrC, NqrD, NqrE and NqrF.

It catalyses the reaction a ubiquinone + n Na(+)(in) + NADH + H(+) = a ubiquinol + n Na(+)(out) + NAD(+). Functionally, NQR complex catalyzes the reduction of ubiquinone-1 to ubiquinol by two successive reactions, coupled with the transport of Na(+) ions from the cytoplasm to the periplasm. NqrA to NqrE are probably involved in the second step, the conversion of ubisemiquinone to ubiquinol. In Vibrio vulnificus (strain CMCP6), this protein is Na(+)-translocating NADH-quinone reductase subunit A.